A 1958-amino-acid chain; its full sequence is Callose synthase 7 (1958 aa).

Positions 1–29 (MASTSSGGRGEDGRPPQMQPVRSMSRKMT) are disordered. Residues 1-504 (MASTSSGGRG…LYRSFDRMWM (504 aa)) are Cytoplasmic-facing. Residues 505 to 525 (FLVLSLQTMIIVAWHPSGSIL) traverse the membrane as a helical segment. Topologically, residues 526–535 (AIFTEDVFRN) are extracellular. Residues 536–556 (VLTIFITSAFLNLLQATLDLV) traverse the membrane as a helical segment. Over 557–569 (LSFGAWKSLKFSQ) the chain is Cytoplasmic. Residues 570–590 (IMRYITKFLMAAMWAIMLPIT) form a helical membrane-spanning segment. Topologically, residues 591-620 (YSKSVQNPTGLIKFFSSWVGSWLHRSLYDY) are extracellular. A helical transmembrane segment spans residues 621-641 (AIALYVLPNILAAVFFLLPPL). Topologically, residues 642-673 (RRIMERSNMRIVTLIMWWAQPKLYIGRGMHEE) are cytoplasmic. The chain crosses the membrane as a helical span at residues 674–694 (MFALFKYTFFWVMLLLSKLAF). Residues 695–730 (SYYVEILPLVNPTKLIWDMHVVNYEWHEFFPNATHN) are Extracellular-facing. A helical transmembrane segment spans residues 731–751 (IGVIIAIWGPIVLVYFMDTQI). At 752-1496 (WYAIFSTLFG…FDFYRMLSFY (745 aa)) the chain is on the cytoplasmic side. Residues 1497–1517 (FTTVGFYFSSMITVLTVYVFL) form a helical membrane-spanning segment. The Extracellular segment spans residues 1518–1547 (YGRLYLVLSGLEKNILQSASVHESNALEQA). Residues 1548-1568 (LAAQSVFQLGFLMVLPMVMEI) form a helical membrane-spanning segment. The Cytoplasmic portion of the chain corresponds to 1569-1576 (GLEKGFRT). Residues 1577–1597 (ALGDFIIMQLQLASVFFTFQL) form a helical membrane-spanning segment. Residues 1598–1640 (GTKAHYFGRTILHGGSKYRATGRGFVVFHAKFAENYRLYSRSH) lie on the Extracellular side of the membrane. A helical membrane pass occupies residues 1641–1661 (FVKGLELVILLVVYQVYGTSY). The Cytoplasmic segment spans residues 1662-1667 (RSSSTY). Residues 1668–1688 (MYITFSMWFLVTSWLFAPFIF) traverse the membrane as a helical segment. The Extracellular portion of the chain corresponds to 1689–1742 (NPSGFEWQKTVDDWTDWKRWMGNRGGIGIVLDKSWESWWDIEQEHLKHTNLRGR). A helical transmembrane segment spans residues 1743–1763 (VLEILLALRFLLYQYGIVYHL). The Cytoplasmic portion of the chain corresponds to 1764–1771 (NIARRHTT). Residues 1772 to 1792 (FLVYGLSWAILLSVLLVLKMV) form a helical membrane-spanning segment. Topologically, residues 1793-1812 (SMGRRKFGTDFQVMFRILKA) are extracellular. Residues 1813–1833 (LLFLGFLSVMTVLFVVCGLTI) form a helical membrane-spanning segment. Topologically, residues 1834–1835 (SD) are cytoplasmic. Residues 1836-1856 (LFASILAFLPTGWAILLIGQA) form a helical membrane-spanning segment. Residues 1857 to 1878 (LRSVFKGLGFWDSVKELGRAYE) are Extracellular-facing. The helical transmembrane segment at 1879 to 1899 (YIMGLVIFTPIAVLSWFPFVS) threads the bilayer. The Cytoplasmic segment spans residues 1900–1958 (EFQTRLLFNQAFSRGLQISMILAGKKDKETPSTKYLGHTEESFGLEHDTNTFNHYYLWT).

The protein belongs to the glycosyltransferase 48 family.

It is found in the cell membrane. It catalyses the reaction [(1-&gt;3)-beta-D-glucosyl](n) + UDP-alpha-D-glucose = [(1-&gt;3)-beta-D-glucosyl](n+1) + UDP + H(+). In terms of biological role, involved in callose synthesis at the forming cell plate during cytokinesis. During plant growth and development, callose is found as a transitory component of the cell plate in dividing cells, is a major component of pollen mother cell walls and pollen tubes, and is found as a structural component of plasmodesmatal canals. The chain is Callose synthase 7 (CALS7) from Arabidopsis thaliana (Mouse-ear cress).